Reading from the N-terminus, the 102-residue chain is ATP-dependent Clp protease adapter protein ClpS (102 aa).

The protein belongs to the ClpS family. Binds to the N-terminal domain of the chaperone ClpA.

Involved in the modulation of the specificity of the ClpAP-mediated ATP-dependent protein degradation. The polypeptide is ATP-dependent Clp protease adapter protein ClpS (Shewanella halifaxensis (strain HAW-EB4)).